Reading from the N-terminus, the 139-residue chain is Transcription antitermination protein NusB (139 aa).

It belongs to the NusB family.

Its function is as follows. Involved in transcription antitermination. Required for transcription of ribosomal RNA (rRNA) genes. Binds specifically to the boxA antiterminator sequence of the ribosomal RNA (rrn) operons. In Escherichia coli (strain K12 / MC4100 / BW2952), this protein is Transcription antitermination protein NusB.